A 180-amino-acid polypeptide reads, in one-letter code: Nudix hydrolase 16, mitochondrial (180 aa).

The region spanning 18-162 (GSRLVAGCIP…WMKDALVEGF (145 aa)) is the Nudix hydrolase domain. Position 60 (phenylalanine 60) interacts with substrate. Mn(2+)-binding residues include glycine 63, glutamate 78, glutamate 82, and glutamate 144. The Nudix box signature appears at 63–84 (GGWENDETVREAAAREAVEEAG).

The protein belongs to the Nudix hydrolase family. Requires Mg(2+) as cofactor. The cofactor is Mn(2+). As to expression, expressed in roots, leaves, stems and inflorescences.

The protein resides in the mitochondrion. Its function is as follows. Probably mediates the hydrolysis of some nucleoside diphosphate derivatives. The polypeptide is Nudix hydrolase 16, mitochondrial (NUDT16) (Arabidopsis thaliana (Mouse-ear cress)).